The primary structure comprises 204 residues: Peptidyl-tRNA hydrolase (204 aa).

Tyrosine 19 is a binding site for tRNA. Histidine 24 serves as the catalytic Proton acceptor. Residues tyrosine 70, asparagine 72, and asparagine 118 each contribute to the tRNA site.

Belongs to the PTH family. In terms of assembly, monomer.

The protein localises to the cytoplasm. It carries out the reaction an N-acyl-L-alpha-aminoacyl-tRNA + H2O = an N-acyl-L-amino acid + a tRNA + H(+). In terms of biological role, hydrolyzes ribosome-free peptidyl-tRNAs (with 1 or more amino acids incorporated), which drop off the ribosome during protein synthesis, or as a result of ribosome stalling. Catalyzes the release of premature peptidyl moieties from peptidyl-tRNA molecules trapped in stalled 50S ribosomal subunits, and thus maintains levels of free tRNAs and 50S ribosomes. The polypeptide is Peptidyl-tRNA hydrolase (Prochlorococcus marinus (strain SARG / CCMP1375 / SS120)).